A 210-amino-acid chain; its full sequence is Adenylate kinase (210 aa).

An ATP-binding site is contributed by 10-15 (GSGKGT). The tract at residues 30 to 59 (STGDLFRANISNATPLGKEIKQIVENGQLV) is NMP. AMP is bound by residues Thr-31, Arg-36, 57 to 59 (QLV), 85 to 88 (GFPR), and Gln-92. The tract at residues 121-158 (GRRICQSCGGIFNIYTLPTKEKGICDLCKGSLYQRKDD) is LID. Arg-122 provides a ligand contact to ATP. Zn(2+) contacts are provided by Cys-125 and Cys-128. 131–132 (IF) is a binding site for ATP. Zn(2+)-binding residues include Cys-145 and Cys-148. Positions 155 and 166 each coordinate AMP. ATP is bound at residue Lys-194.

Belongs to the adenylate kinase family. In terms of assembly, monomer.

It is found in the cytoplasm. The catalysed reaction is AMP + ATP = 2 ADP. The protein operates within purine metabolism; AMP biosynthesis via salvage pathway; AMP from ADP: step 1/1. In terms of biological role, catalyzes the reversible transfer of the terminal phosphate group between ATP and AMP. Plays an important role in cellular energy homeostasis and in adenine nucleotide metabolism. This Borrelia turicatae (strain 91E135) protein is Adenylate kinase.